Consider the following 200-residue polypeptide: MVHITTVMIIIGAYLIGSIPFGFLLAYFWKGIDIRKCGSGNIGATNVWRTLGKVPGMIVLILDMIKGISAVLLAKQLENTDIAVLGVALAVMAGHSWPLWLRFKGGKIIATGAGAILALSPMPLLLAFLVWLTTVVVSRYVSLGSILGAVSLPIWMALLNQNRHYLIFSVLVASFAVWKHSSNIGRLIKGTEFKIGQKKT.

6 helical membrane passes run 9 to 29 (IIIGAYLIGSIPFGFLLAYFW), 54 to 74 (VPGMIVLILDMIKGISAVLLA), 81 to 101 (DIAVLGVALAVMAGHSWPLWL), 112 to 132 (GAGAILALSPMPLLLAFLVWL), 140 to 160 (YVSLGSILGAVSLPIWMALLN), and 165 to 185 (YLIFSVLVASFAVWKHSSNIG).

This sequence belongs to the PlsY family. Probably interacts with PlsX.

Its subcellular location is the cell membrane. The catalysed reaction is an acyl phosphate + sn-glycerol 3-phosphate = a 1-acyl-sn-glycero-3-phosphate + phosphate. It participates in lipid metabolism; phospholipid metabolism. In terms of biological role, catalyzes the transfer of an acyl group from acyl-phosphate (acyl-PO(4)) to glycerol-3-phosphate (G3P) to form lysophosphatidic acid (LPA). This enzyme utilizes acyl-phosphate as fatty acyl donor, but not acyl-CoA or acyl-ACP. The chain is Glycerol-3-phosphate acyltransferase from Desulforamulus reducens (strain ATCC BAA-1160 / DSM 100696 / MI-1) (Desulfotomaculum reducens).